Here is a 111-residue protein sequence, read N- to C-terminus: Small ribosomal subunit protein bS16 (111 aa).

Belongs to the bacterial ribosomal protein bS16 family.

The polypeptide is Small ribosomal subunit protein bS16 (Rickettsia prowazekii (strain Madrid E)).